A 298-amino-acid polypeptide reads, in one-letter code: FH protein interacting protein FIP2 (298 aa).

Residues 9–80 form the BTB domain; that stretch reads SMVRLNIGGK…LRDGVIPSLS (72 aa). Pentapeptide repeat domains are found at residues 129–165, 166–203, 216–255, and 256–295; these read ERVR…FFSR, TNLQ…GALL, ACLV…NLKG, and AKLS…NMTG.

Interacts with FH1. Expressed in all tissues but preferentially in roots and flowers.

The protein operates within protein modification; protein ubiquitination. Its function is as follows. May act as a substrate-specific adapter of an E3 ubiquitin-protein ligase complex (CUL3-RBX1-BTB) which mediates the ubiquitination and subsequent proteasomal degradation of target proteins. This chain is FH protein interacting protein FIP2 (FIP2), found in Arabidopsis thaliana (Mouse-ear cress).